Consider the following 397-residue polypeptide: CCA-adding enzyme (397 aa).

Gly-26 and Arg-29 together coordinate ATP. CTP contacts are provided by Gly-26 and Arg-29. Mg(2+)-binding residues include Asp-39 and Asp-41. 5 residues coordinate ATP: Arg-110, Asp-153, Arg-156, Arg-159, and Arg-162. Residues Arg-110, Asp-153, Arg-156, Arg-159, and Arg-162 each contribute to the CTP site.

Belongs to the tRNA nucleotidyltransferase/poly(A) polymerase family. Bacterial CCA-adding enzyme type 3 subfamily. In terms of assembly, homodimer. Requires Mg(2+) as cofactor.

It catalyses the reaction a tRNA precursor + 2 CTP + ATP = a tRNA with a 3' CCA end + 3 diphosphate. It carries out the reaction a tRNA with a 3' CCA end + 2 CTP + ATP = a tRNA with a 3' CCACCA end + 3 diphosphate. Functionally, catalyzes the addition and repair of the essential 3'-terminal CCA sequence in tRNAs without using a nucleic acid template. Adds these three nucleotides in the order of C, C, and A to the tRNA nucleotide-73, using CTP and ATP as substrates and producing inorganic pyrophosphate. tRNA 3'-terminal CCA addition is required both for tRNA processing and repair. Also involved in tRNA surveillance by mediating tandem CCA addition to generate a CCACCA at the 3' terminus of unstable tRNAs. While stable tRNAs receive only 3'-terminal CCA, unstable tRNAs are marked with CCACCA and rapidly degraded. In Bacillus cereus (strain AH187), this protein is CCA-adding enzyme.